The primary structure comprises 443 residues: MVVTRFAPSPTGRLHVGNIRTALHNWMWARAHGGRFLLRLDDTDLERSTEENAASIRADLGWLGLHPDAEAKQSDRFALYESRFEELRAQGRVYPCYESAEELELKRKILAGRGLPPIYDRAALALSDAERTAYEAEGRRPHWRFLLDHESPIAWTDLIRGPQHLDPRLLSDPVVRRADGSWLYMLPSVIDDIAMGVTHVVRGEDHVTNTGLQLQMFAALGAPEPAFAHEALLVGSEGKLSKRLGSLGCDAFRDEGIEPVALIALLARIGTSLPVEPVADPAALFDGFDFARFGRAPARFDLDELKALNARIIHMLPYAAVAGRLPAGMDAAGWEAIRPNLTRVDEAAGWWAVVEGAVSAAIAPEDRAYLAQAADAAAAIDWNEGAWKALTAALGAATGRKGKALFLPLRLALTGREHGPDMNALLPLIGKARAVERLRAAAS.

Positions 8–18 (PSPTGRLHVGN) match the 'HIGH' region motif. A 'KMSKS' region motif is present at residues 239-243 (KLSKR). Residue Lys-242 coordinates ATP.

It belongs to the class-I aminoacyl-tRNA synthetase family. Glutamate--tRNA ligase type 1 subfamily. Monomer.

The protein localises to the cytoplasm. The catalysed reaction is tRNA(Glu) + L-glutamate + ATP = L-glutamyl-tRNA(Glu) + AMP + diphosphate. Catalyzes the attachment of glutamate to tRNA(Glu) in a two-step reaction: glutamate is first activated by ATP to form Glu-AMP and then transferred to the acceptor end of tRNA(Glu). This Rhizorhabdus wittichii (strain DSM 6014 / CCUG 31198 / JCM 15750 / NBRC 105917 / EY 4224 / RW1) (Sphingomonas wittichii) protein is Glutamate--tRNA ligase 1.